Here is a 433-residue protein sequence, read N- to C-terminus: ATP-dependent protease ATPase subunit HslU (433 aa).

ATP-binding positions include V18, 60–65 (GVGKTE), D246, E311, and R383.

It belongs to the ClpX chaperone family. HslU subfamily. In terms of assembly, a double ring-shaped homohexamer of HslV is capped on each side by a ring-shaped HslU homohexamer. The assembly of the HslU/HslV complex is dependent on binding of ATP.

It is found in the cytoplasm. ATPase subunit of a proteasome-like degradation complex; this subunit has chaperone activity. The binding of ATP and its subsequent hydrolysis by HslU are essential for unfolding of protein substrates subsequently hydrolyzed by HslV. HslU recognizes the N-terminal part of its protein substrates and unfolds these before they are guided to HslV for hydrolysis. In Rhodopseudomonas palustris (strain BisB5), this protein is ATP-dependent protease ATPase subunit HslU.